Reading from the N-terminus, the 150-residue chain is MKSIEVHTDGSCLGNPGPGGWAALLRYNGREKELAGGEAVSTNNRMELMAAIMALETLTEPCEIVLHTDSQYVRQGITEWMPGWVRRNWKTAGGDPVKNRELWERLHAATQRHRIDWRWVKGHNGDPDNERVDVLARNQATAQRDGRATS.

The 141-residue stretch at 1–141 folds into the RNase H type-1 domain; sequence MKSIEVHTDG…VDVLARNQAT (141 aa). The Mg(2+) site is built by Asp-9, Glu-47, Asp-69, and Asp-133.

This sequence belongs to the RNase H family. As to quaternary structure, monomer. Requires Mg(2+) as cofactor.

It localises to the cytoplasm. The catalysed reaction is Endonucleolytic cleavage to 5'-phosphomonoester.. Endonuclease that specifically degrades the RNA of RNA-DNA hybrids. This is Ribonuclease H from Xanthomonas oryzae pv. oryzae (strain MAFF 311018).